Here is a 212-residue protein sequence, read N- to C-terminus: ATP phosphoribosyltransferase (212 aa).

It belongs to the ATP phosphoribosyltransferase family. Short subfamily. Heteromultimer composed of HisG and HisZ subunits.

It localises to the cytoplasm. The catalysed reaction is 1-(5-phospho-beta-D-ribosyl)-ATP + diphosphate = 5-phospho-alpha-D-ribose 1-diphosphate + ATP. It functions in the pathway amino-acid biosynthesis; L-histidine biosynthesis; L-histidine from 5-phospho-alpha-D-ribose 1-diphosphate: step 1/9. Functionally, catalyzes the condensation of ATP and 5-phosphoribose 1-diphosphate to form N'-(5'-phosphoribosyl)-ATP (PR-ATP). Has a crucial role in the pathway because the rate of histidine biosynthesis seems to be controlled primarily by regulation of HisG enzymatic activity. The sequence is that of ATP phosphoribosyltransferase from Clostridium botulinum (strain Okra / Type B1).